The following is a 326-amino-acid chain: L-lactate dehydrogenase (326 aa).

Residues V26, D47, K52, Y78, and 92 to 93 contribute to the NAD(+) site; that span reads GA. Residues Q95 and R101 each coordinate substrate. Residues T114, 131 to 133, and S156 each bind NAD(+); that span reads ASN. 133–136 is a substrate binding site; sequence NPVD. Residue 161–164 coordinates substrate; that stretch reads DTAR. The beta-D-fructose 1,6-bisphosphate site is built by R166 and H181. Residue H188 is the Proton acceptor of the active site. Y233 is modified (phosphotyrosine). T242 contacts substrate.

It belongs to the LDH/MDH superfamily. LDH family. In terms of assembly, homotetramer.

The protein resides in the cytoplasm. The catalysed reaction is (S)-lactate + NAD(+) = pyruvate + NADH + H(+). The protein operates within fermentation; pyruvate fermentation to lactate; (S)-lactate from pyruvate: step 1/1. With respect to regulation, allosterically activated by fructose 1,6-bisphosphate (FBP). Its function is as follows. Catalyzes the conversion of lactate to pyruvate. The sequence is that of L-lactate dehydrogenase from Corynebacterium jeikeium (strain K411).